A 219-amino-acid chain; its full sequence is Proteasome subunit beta type-9 (219 aa).

Positions 1–20 (MLRAGAPTAGSFRTEEVHTG) are cleaved as a propeptide — removed in mature form. Thr-21 serves as the catalytic Nucleophile. N6-acetyllysine occurs at positions 53 and 109.

The protein belongs to the peptidase T1B family. As to quaternary structure, the 26S proteasome consists of a 20S proteasome core and two 19S regulatory subunits. The 20S proteasome core is composed of 28 subunits that are arranged in four stacked rings, resulting in a barrel-shaped structure. The two end rings are each formed by seven alpha subunits, and the two central rings are each formed by seven beta subunits. The catalytic chamber with the active sites is on the inside of the barrel. Component of the immunoproteasome, where it displaces the equivalent housekeeping subunit PSMB6. Component of the spermatoproteasome, a form of the proteasome specifically found in testis. Autocleaved. The resulting N-terminal Thr residue of the mature subunit is responsible for the nucleophile proteolytic activity.

It localises to the cytoplasm. It is found in the nucleus. It carries out the reaction Cleavage of peptide bonds with very broad specificity.. In terms of biological role, the proteasome is a multicatalytic proteinase complex which is characterized by its ability to cleave peptides with Arg, Phe, Tyr, Leu, and Glu adjacent to the leaving group at neutral or slightly basic pH. The proteasome has an ATP-dependent proteolytic activity. This subunit is involved in antigen processing to generate class I binding peptides. This Mus spicilegus (Steppe mouse) protein is Proteasome subunit beta type-9 (Psmb9).